The sequence spans 117 residues: Minor capsid protein VP2 (117 aa).

The protein belongs to the lagovirus VP2 protein family. Homooligomer. The portal-like structure consists in 12 copies of VP2. Interacts with capsid protein VP1.

The protein localises to the virion. It localises to the host cytoplasm. In terms of biological role, minor structural protein that forms a portal-like structure at a unique three-fold axis of symmetry, following binding to the host receptor. The channel formed by VP2 may allow the delivery of the viral genome through the host endosomal membrane. This is Minor capsid protein VP2 from Rabbit hemorrhagic disease virus (strain AST89) (Ra/LV/RHDV/AST89/1989/SP).